The primary structure comprises 104 residues: Large ribosomal subunit protein bL27 (104 aa).

The propeptide occupies 1–15 (MNNKYFLTKIDLQFF).

This sequence belongs to the bacterial ribosomal protein bL27 family. In terms of processing, the N-terminus is cleaved by ribosomal processing cysteine protease Prp.

This is Large ribosomal subunit protein bL27 from Mycoplasma pneumoniae (strain ATCC 29342 / M129 / Subtype 1) (Mycoplasmoides pneumoniae).